The chain runs to 128 residues: Nanos homolog 1 (128 aa).

An essential for its translational repressor activity region spans residues 7–23 (FDSWSDYLGLSSLISRG). The tract at residues 23–56 (GLQPRGEGENPSPRWNVSCPAPAEPLPSKEPEGR) is disordered. Residues 60–114 (GCGFCRSNKEAMSLYSSHRLRSLDGRVLCPVLRGYTCPLCGANGDWAHTMRYCPL) form a Nanos-type zinc finger. Zn(2+)-binding residues include cysteine 61, cysteine 64, histidine 77, cysteine 88, cysteine 96, cysteine 99, histidine 107, and cysteine 112. 2 consecutive short sequence motifs (C2HC) follow at residues 61-88 (CGFC…RVLC) and 96-112 (CPLC…MRYC).

It belongs to the nanos family. In terms of assembly, interacts with ccnb1.

It is found in the cytoplasm. It localises to the perinuclear region. Functionally, acts as a translational repressor. Can mediate repression affecting different steps in the translation process: cap-driven, IRES-driven, polyadenylated RNAs or nonpolyadenylated RNAs. Essential for the development of primordial germ cells (PGCs) by ensuring their proper migration and survival. This chain is Nanos homolog 1 (nanos1), found in Xenopus borealis (Kenyan clawed frog).